Reading from the N-terminus, the 351-residue chain is Phenylalanine--tRNA ligase alpha subunit (351 aa).

Glutamate 276 contributes to the Mg(2+) binding site.

It belongs to the class-II aminoacyl-tRNA synthetase family. Phe-tRNA synthetase alpha subunit type 1 subfamily. Tetramer of two alpha and two beta subunits. It depends on Mg(2+) as a cofactor.

Its subcellular location is the cytoplasm. The catalysed reaction is tRNA(Phe) + L-phenylalanine + ATP = L-phenylalanyl-tRNA(Phe) + AMP + diphosphate + H(+). This chain is Phenylalanine--tRNA ligase alpha subunit, found in Psychrobacter arcticus (strain DSM 17307 / VKM B-2377 / 273-4).